Consider the following 789-residue polypeptide: Transducer protein Htr6 (789 aa).

2 consecutive transmembrane segments (helical) span residues 29–49 (FAVAFIVVLVVIAGAGVFAFQ) and 294–314 (TVTVLVVLAVISLAIVGIALG). HAMP domains lie at 315-367 (RHTV…DRIQ) and 409-462 (ERLQ…ATIA). The Methyl-accepting transducer domain occupies 481–717 (GAEEIETTSQ…SVVRRVDDVA (237 aa)). The disordered stretch occupies residues 763 to 789 (NQFETRADADEPDADTTVDASADDTGD). Residues 772-789 (DEPDADTTVDASADDTGD) are compositionally biased toward acidic residues.

The protein belongs to the methyl-accepting chemotaxis (MCP) protein family. Methylated by CheR.

Its subcellular location is the cell membrane. In terms of biological role, potentially involved in chemo- or phototactic signal transduction. The sequence is that of Transducer protein Htr6 (htr6) from Halobacterium salinarum (strain ATCC 29341 / DSM 671 / R1).